We begin with the raw amino-acid sequence, 120 residues long: Large ribosomal subunit protein eL8 (120 aa).

It belongs to the eukaryotic ribosomal protein eL8 family. Part of the 50S ribosomal subunit. Probably part of the RNase P complex.

It localises to the cytoplasm. In terms of biological role, multifunctional RNA-binding protein that recognizes the K-turn motif in ribosomal RNA, the RNA component of RNase P, box H/ACA, box C/D and box C'/D' sRNAs. In Halorubrum lacusprofundi (strain ATCC 49239 / DSM 5036 / JCM 8891 / ACAM 34), this protein is Large ribosomal subunit protein eL8.